We begin with the raw amino-acid sequence, 293 residues long: Protein YIF1A (293 aa).

The segment at M1–Y33 is disordered. The residue at position 2 (A2) is an N-acetylalanine. Residues A2–D138 lie on the Cytoplasmic side of the membrane. S12 is subject to Phosphoserine. A helical membrane pass occupies residues L139–I159. The Lumenal portion of the chain corresponds to Q160–T174. A helical transmembrane segment spans residues A175–V195. Over R196 to H203 the chain is Cytoplasmic. A helical transmembrane segment spans residues L204–G226. Residues S227–G229 lie on the Lumenal side of the membrane. A helical transmembrane segment spans residues Y230 to L249. Topologically, residues R250 to Y271 are cytoplasmic. A helical membrane pass occupies residues L272–V292.

This sequence belongs to the YIF1 family. As to quaternary structure, interacts with YIPF5.

Its subcellular location is the endoplasmic reticulum membrane. It is found in the golgi apparatus membrane. The protein localises to the endoplasmic reticulum-Golgi intermediate compartment membrane. Functionally, possible role in transport between endoplasmic reticulum and Golgi. In Homo sapiens (Human), this protein is Protein YIF1A (YIF1A).